The sequence spans 228 residues: ATP phosphoribosyltransferase (228 aa).

Belongs to the ATP phosphoribosyltransferase family. Short subfamily. As to quaternary structure, heteromultimer composed of HisG and HisZ subunits.

Its subcellular location is the cytoplasm. It carries out the reaction 1-(5-phospho-beta-D-ribosyl)-ATP + diphosphate = 5-phospho-alpha-D-ribose 1-diphosphate + ATP. The protein operates within amino-acid biosynthesis; L-histidine biosynthesis; L-histidine from 5-phospho-alpha-D-ribose 1-diphosphate: step 1/9. Functionally, catalyzes the condensation of ATP and 5-phosphoribose 1-diphosphate to form N'-(5'-phosphoribosyl)-ATP (PR-ATP). Has a crucial role in the pathway because the rate of histidine biosynthesis seems to be controlled primarily by regulation of HisG enzymatic activity. The sequence is that of ATP phosphoribosyltransferase from Moorella thermoacetica (strain ATCC 39073 / JCM 9320).